We begin with the raw amino-acid sequence, 338 residues long: 1-aminocyclopropane-1-carboxylate deaminase (338 aa).

Position 51 is an N6-(pyridoxal phosphate)lysine (K51). The active-site Nucleophile is the S78.

It belongs to the ACC deaminase/D-cysteine desulfhydrase family. As to quaternary structure, homotrimer. Pyridoxal 5'-phosphate is required as a cofactor.

The catalysed reaction is 1-aminocyclopropane-1-carboxylate + H2O = 2-oxobutanoate + NH4(+). Its function is as follows. Catalyzes a cyclopropane ring-opening reaction, the irreversible conversion of 1-aminocyclopropane-1-carboxylate (ACC) to ammonia and alpha-ketobutyrate. Allows growth on ACC as a nitrogen source. This chain is 1-aminocyclopropane-1-carboxylate deaminase, found in Variovorax paradoxus.